A 96-amino-acid polypeptide reads, in one-letter code: 2Fe-2S ferredoxin-5 (96 aa).

A 2Fe-2S ferredoxin-type domain is found at 2 to 96 (PKVIVANINA…GKGDVVIYLP (95 aa)). [2Fe-2S] cluster is bound by residues Cys36, Cys42, Cys45, and Cys81.

Belongs to the adrenodoxin/putidaredoxin family. Requires [2Fe-2S] cluster as cofactor.

Functionally, may be involved in the assembly of iron-sulfur clusters (Isc-Fd). This is 2Fe-2S ferredoxin-5 (fdx5) from Aquifex aeolicus (strain VF5).